Consider the following 82-residue polypeptide: Cytochrome b559 subunit alpha (82 aa).

Residues 21–35 (VIHSITIPALFIAGW) traverse the membrane as a helical segment. A heme-binding site is contributed by histidine 23.

It belongs to the PsbE/PsbF family. Heterodimer of an alpha subunit and a beta subunit. PSII is composed of 1 copy each of membrane proteins PsbA, PsbB, PsbC, PsbD, PsbE, PsbF, PsbH, PsbI, PsbJ, PsbK, PsbL, PsbM, PsbT, PsbX, PsbY, PsbZ, Psb30/Ycf12, peripheral proteins PsbO, CyanoQ (PsbQ), PsbU, PsbV and a large number of cofactors. It forms dimeric complexes. Heme b is required as a cofactor.

The protein localises to the cellular thylakoid membrane. Its function is as follows. This b-type cytochrome is tightly associated with the reaction center of photosystem II (PSII). PSII is a light-driven water:plastoquinone oxidoreductase that uses light energy to abstract electrons from H(2)O, generating O(2) and a proton gradient subsequently used for ATP formation. It consists of a core antenna complex that captures photons, and an electron transfer chain that converts photonic excitation into a charge separation. The chain is Cytochrome b559 subunit alpha from Nostoc punctiforme (strain ATCC 29133 / PCC 73102).